Here is a 93-residue protein sequence, read N- to C-terminus: Protein YzgL (93 aa).

This Escherichia coli (strain K12) protein is Protein YzgL (yzgL).